Here is a 66-residue protein sequence, read N- to C-terminus: Large ribosomal subunit protein bL33B (66 aa).

Belongs to the bacterial ribosomal protein bL33 family.

This chain is Large ribosomal subunit protein bL33B, found in Synechococcus sp. (strain CC9605).